Consider the following 459-residue polypeptide: cAMP-dependent protein kinase regulatory subunit (459 aa).

Positions glutamine 30–phenylalanine 219 are dimerization and phosphorylation. Disordered regions lie at residues valine 78–threonine 109 and phenylalanine 125–lysine 168. The span at histidine 95–threonine 109 shows a compositional bias: basic and acidic residues. Over residues lysine 146 to lysine 168 the composition is skewed to low complexity. Serine 180 is modified (phosphoserine). 3',5'-cyclic AMP is bound by residues leucine 220 to aspartate 335, glutamate 285, arginine 294, valine 338 to aspartate 454, glutamate 404, and arginine 413.

The protein belongs to the cAMP-dependent kinase regulatory chain family. Tetramer, composed of 2 regulatory (R) and 2 catalytic (C) subunits. In the presence of cAMP it dissociates into 2 active monomeric C subunits and an R dimer.

The chain is cAMP-dependent protein kinase regulatory subunit (BCY1) from Candida albicans (strain SC5314 / ATCC MYA-2876) (Yeast).